The primary structure comprises 730 residues: Dynein axonemal intermediate chain 7 (730 aa).

The span at 1–14 (MAPKSKKAPSKKKM) shows a compositional bias: basic residues. The disordered stretch occupies residues 1 to 20 (MAPKSKKAPSKKKMTKAERL).

It belongs to the DNAI7 family. In terms of assembly, part of the multisubunit axonemal dynein complex formed at least of two heavy chains and a number of intermediate and light chains. Interacts with tubulin. Associates with microtubule. In terms of processing, ubiquitinated. Ubiquitination leads to its degradation through the 26S proteasome. Ubiquitin-proteasome-mediated DNAI7 degradation occurs in mitosis. As to expression, high expressed in lung, kidney, and testis.

The protein resides in the cell projection. It is found in the cilium. The protein localises to the cytoplasm. In terms of biological role, via its association with the multisubunit axonemal dynein complex, is potentially involved in the regulation of cilia function. May also act as a cell cycle regulator. The chain is Dynein axonemal intermediate chain 7 (Dnai7) from Mus musculus (Mouse).